Here is a 355-residue protein sequence, read N- to C-terminus: Guanine nucleotide-binding protein alpha-12 subunit (355 aa).

The region spanning 28–355 (RQINLLLLGS…EQNLKTLMMQ (328 aa)) is the G-alpha domain. Residues 31–44 (NLLLLGSGESGKST) are G1 motif. Residues 36–43 (GSGESGKS), 176–182 (LFCRKAT), 201–205 (DVGGQ), 270–273 (NKND), and Ala-327 each bind GTP. Ser-43 and Thr-182 together coordinate Mg(2+). Positions 174 to 182 (DILFCRKAT) are G2 motif. The interval 197–206 (FRFIDVGGQR) is G3 motif. A G4 motif region spans residues 266 to 273 (ILFMNKND). Residues 325 to 330 (TTAVDT) form a G5 motif region.

This sequence belongs to the G-alpha family. G proteins are composed of 3 units; alpha, beta and gamma. The alpha chain contains the guanine nucleotide binding site.

Its function is as follows. Guanine nucleotide-binding proteins (G proteins) are involved as modulators or transducers in various transmembrane signaling systems. May play a role in resistance to fungal infection in the epidermis by regulating the up-regulation of several antimicrobial peptides of the NLP and CNC families. Upstream of plc-3, egl-8, tpa-1 and the p38-like pathway, required for the expression of antimicrobial peptide nlp-29 in the epidermis in response to fungal infection or physical injury. This Caenorhabditis briggsae protein is Guanine nucleotide-binding protein alpha-12 subunit (gpa-12).